A 603-amino-acid polypeptide reads, in one-letter code: Proline--tRNA ligase (603 aa).

It belongs to the class-II aminoacyl-tRNA synthetase family. ProS type 1 subfamily. In terms of assembly, homodimer.

It localises to the cytoplasm. It catalyses the reaction tRNA(Pro) + L-proline + ATP = L-prolyl-tRNA(Pro) + AMP + diphosphate. In terms of biological role, catalyzes the attachment of proline to tRNA(Pro) in a two-step reaction: proline is first activated by ATP to form Pro-AMP and then transferred to the acceptor end of tRNA(Pro). As ProRS can inadvertently accommodate and process non-cognate amino acids such as alanine and cysteine, to avoid such errors it has two additional distinct editing activities against alanine. One activity is designated as 'pretransfer' editing and involves the tRNA(Pro)-independent hydrolysis of activated Ala-AMP. The other activity is designated 'posttransfer' editing and involves deacylation of mischarged Ala-tRNA(Pro). The misacylated Cys-tRNA(Pro) is not edited by ProRS. This chain is Proline--tRNA ligase, found in Arthrobacter sp. (strain FB24).